The chain runs to 313 residues: ADP-L-glycero-D-manno-heptose-6-epimerase (313 aa).

NADP(+)-binding positions include Met10–Ile11, Asp31–Asn32, Lys38, Lys53, Glu75–Ser79, and Asn92. The Proton acceptor role is filled by Tyr139. Residue Lys143 coordinates NADP(+). A substrate-binding site is contributed by Asn174. NADP(+)-binding residues include Val175 and Lys183. Lys183 serves as the catalytic Proton acceptor. Residues Ser185, His192, Phe206–Ser209, Arg214, and Tyr277 each bind substrate.

Belongs to the NAD(P)-dependent epimerase/dehydratase family. HldD subfamily. Homopentamer. NADP(+) serves as cofactor.

It carries out the reaction ADP-D-glycero-beta-D-manno-heptose = ADP-L-glycero-beta-D-manno-heptose. The protein operates within nucleotide-sugar biosynthesis; ADP-L-glycero-beta-D-manno-heptose biosynthesis; ADP-L-glycero-beta-D-manno-heptose from D-glycero-beta-D-manno-heptose 7-phosphate: step 4/4. In terms of biological role, catalyzes the interconversion between ADP-D-glycero-beta-D-manno-heptose and ADP-L-glycero-beta-D-manno-heptose via an epimerization at carbon 6 of the heptose. This Aliivibrio fischeri (strain MJ11) (Vibrio fischeri) protein is ADP-L-glycero-D-manno-heptose-6-epimerase.